The primary structure comprises 155 residues: E3 ubiquitin-protein ligase RHA2A (155 aa).

The RING-type; atypical zinc finger occupies 86–128 (CVVCLSKLKEGEEVRKLECRHVFHKKCLEGWLHQFNFTCPLCR).

As to quaternary structure, interacts with NAC019 and NAC055. As to expression, expressed in stems, flowers, cauline leaves, rosettes, siliques, seeds and roots.

The protein localises to the cytoplasm. It localises to the nucleus. It catalyses the reaction S-ubiquitinyl-[E2 ubiquitin-conjugating enzyme]-L-cysteine + [acceptor protein]-L-lysine = [E2 ubiquitin-conjugating enzyme]-L-cysteine + N(6)-ubiquitinyl-[acceptor protein]-L-lysine.. Its pathway is protein modification; protein ubiquitination. Functionally, E3 ubiquitin-protein ligase involved in the positive regulation of abscisic acid (ABA) signaling and responses to salt and osmotic stresses during seed germination and early seedling development. Acts additively with RHA2B in regulating ABA signaling and drought response. Possesses E3 ubiquitin ligase activity in vitro. The sequence is that of E3 ubiquitin-protein ligase RHA2A from Arabidopsis thaliana (Mouse-ear cress).